Consider the following 130-residue polypeptide: Hypocretin neuropeptide precursor (130 aa).

Positions 1–32 (MNPPSTKVPWAAVTLLLLLLLPPALLSPGAAA) are cleaved as a signal peptide. A Pyrrolidone carboxylic acid modification is found at Gln33. Disulfide bonds link Cys38–Cys44 and Cys39–Cys46. Leu65 is modified (leucine amide). Methionine amide is present on Met96. Positions 97-130 (GRRAGAEPAPRPCPGRRCPVVAVPSAAPGGRSGV) are cleaved as a propeptide — removed in mature form.

The protein belongs to the orexin family. Specific enzymatic cleavages at paired basic residues yield the different active peptides.

It is found in the rough endoplasmic reticulum. Its subcellular location is the cytoplasmic vesicle. It localises to the synapse. Functionally, neuropeptides that play a significant role in the regulation of food intake and sleep-wakefulness, possibly by coordinating the complex behavioral and physiologic responses of these complementary homeostatic functions. A broader role in the homeostatic regulation of energy metabolism, autonomic function, hormonal balance and the regulation of body fluids, is also suggested. Binds to orexin receptors HCRTR1/OX1R and HCRTR2/OX2R with a high affinity. Stimulates food intake. Modulates pituitary luteinizing hormone secretion in an ovarian steroid-dependent manner. Its function is as follows. Binds to orexin receptor HCRTR2/OX2R only. Stimulates food intake. Modulates pituitary luteinizing hormone secretion in an ovarian steroid-dependent manner. This chain is Hypocretin neuropeptide precursor (HCRT), found in Canis lupus familiaris (Dog).